The primary structure comprises 356 residues: Dual-specificity RNA methyltransferase RlmN (356 aa).

Glu89 acts as the Proton acceptor in catalysis. The Radical SAM core domain occupies 108–341; it reads SHARYTICVS…CTIRESKGLD (234 aa). Cys115 and Cys346 form a disulfide bridge. Positions 122, 126, and 129 each coordinate [4Fe-4S] cluster. Residues 172 to 173, Ser204, 227 to 229, and Asn303 each bind S-adenosyl-L-methionine; these read GE and SLH. The S-methylcysteine intermediate role is filled by Cys346.

This sequence belongs to the radical SAM superfamily. RlmN family. [4Fe-4S] cluster is required as a cofactor.

The protein localises to the cytoplasm. The enzyme catalyses adenosine(2503) in 23S rRNA + 2 reduced [2Fe-2S]-[ferredoxin] + 2 S-adenosyl-L-methionine = 2-methyladenosine(2503) in 23S rRNA + 5'-deoxyadenosine + L-methionine + 2 oxidized [2Fe-2S]-[ferredoxin] + S-adenosyl-L-homocysteine. It carries out the reaction adenosine(37) in tRNA + 2 reduced [2Fe-2S]-[ferredoxin] + 2 S-adenosyl-L-methionine = 2-methyladenosine(37) in tRNA + 5'-deoxyadenosine + L-methionine + 2 oxidized [2Fe-2S]-[ferredoxin] + S-adenosyl-L-homocysteine. Its function is as follows. Specifically methylates position 2 of adenine 2503 in 23S rRNA and position 2 of adenine 37 in tRNAs. m2A2503 modification seems to play a crucial role in the proofreading step occurring at the peptidyl transferase center and thus would serve to optimize ribosomal fidelity. In Campylobacter jejuni (strain RM1221), this protein is Dual-specificity RNA methyltransferase RlmN.